We begin with the raw amino-acid sequence, 502 residues long: ATP synthase subunit alpha (502 aa).

169-176 (GDRQTGKT) provides a ligand contact to ATP.

This sequence belongs to the ATPase alpha/beta chains family. As to quaternary structure, F-type ATPases have 2 components, CF(1) - the catalytic core - and CF(0) - the membrane proton channel. CF(1) has five subunits: alpha(3), beta(3), gamma(1), delta(1), epsilon(1). CF(0) has three main subunits: a(1), b(2) and c(9-12). The alpha and beta chains form an alternating ring which encloses part of the gamma chain. CF(1) is attached to CF(0) by a central stalk formed by the gamma and epsilon chains, while a peripheral stalk is formed by the delta and b chains.

It localises to the cell membrane. The catalysed reaction is ATP + H2O + 4 H(+)(in) = ADP + phosphate + 5 H(+)(out). Its function is as follows. Produces ATP from ADP in the presence of a proton gradient across the membrane. The alpha chain is a regulatory subunit. This chain is ATP synthase subunit alpha, found in Streptococcus pyogenes serotype M12 (strain MGAS9429).